A 388-amino-acid chain; its full sequence is Succinate--CoA ligase [ADP-forming] subunit beta (388 aa).

ATP contacts are provided by residues K46, 53–55, E99, C102, and E107; that span reads GRG. Positions 199 and 213 each coordinate Mg(2+). Residues N264 and 321-323 contribute to the substrate site; that span reads GIV.

This sequence belongs to the succinate/malate CoA ligase beta subunit family. In terms of assembly, heterotetramer of two alpha and two beta subunits. Requires Mg(2+) as cofactor.

The enzyme catalyses succinate + ATP + CoA = succinyl-CoA + ADP + phosphate. The catalysed reaction is GTP + succinate + CoA = succinyl-CoA + GDP + phosphate. Its pathway is carbohydrate metabolism; tricarboxylic acid cycle; succinate from succinyl-CoA (ligase route): step 1/1. Succinyl-CoA synthetase functions in the citric acid cycle (TCA), coupling the hydrolysis of succinyl-CoA to the synthesis of either ATP or GTP and thus represents the only step of substrate-level phosphorylation in the TCA. The beta subunit provides nucleotide specificity of the enzyme and binds the substrate succinate, while the binding sites for coenzyme A and phosphate are found in the alpha subunit. This is Succinate--CoA ligase [ADP-forming] subunit beta from Actinobacillus pleuropneumoniae serotype 3 (strain JL03).